We begin with the raw amino-acid sequence, 317 residues long: Olfactory receptor 51Q1 (317 aa).

The Extracellular portion of the chain corresponds to 1–27; sequence MSQVTNTTQEGIYFILTDIPGFEASHI. N-linked (GlcNAc...) asparagine glycosylation occurs at Asn-6. Residues 28–48 traverse the membrane as a helical segment; the sequence is WISIPVCCLYTISIMGNTTIL. Residues 49-56 lie on the Cytoplasmic side of the membrane; that stretch reads TVIRTEPS. A helical transmembrane segment spans residues 57 to 77; that stretch reads VHQRMYLFLSMLALTDLGLTL. Residues 78 to 101 lie on the Extracellular side of the membrane; it reads TTLPTVMQLLWFNVRRISSEACFA. The cysteines at positions 99 and 191 are disulfide-linked. A helical transmembrane segment spans residues 102–122; that stretch reads QFFFLHGFSFMESSVLLAMSV. At 123–141 the chain is on the cytoplasmic side; that stretch reads DCYVAICCPLHYASILTNE. The chain crosses the membrane as a helical span at residues 142–162; sequence VIGRTGLAIICCCVLAVLPSL. The Extracellular portion of the chain corresponds to 163–198; it reads FLLKRLPFCHSHLLSRSYCLHQDMIRLVCADIRLNS. The helical transmembrane segment at 199–219 threads the bilayer; it reads WYGFALALLIIIVDPLLIVIS. At 220–239 the chain is on the cytoplasmic side; it reads YTLILKNILGTATWAERLRA. The chain crosses the membrane as a helical span at residues 240–260; that stretch reads LNNCLSHILAVLVLYIPMVGV. The Extracellular segment spans residues 261-275; the sequence is SMTHRFAKHASPLVH. A helical transmembrane segment spans residues 276 to 296; sequence VIMANIYLLAPPVMNPIIYSV. At 297-317 the chain is on the cytoplasmic side; that stretch reads KNKQIQWGMLNFLSLKNMHSR.

This sequence belongs to the G-protein coupled receptor 1 family.

The protein localises to the cell membrane. Odorant receptor. The sequence is that of Olfactory receptor 51Q1 (OR51Q1) from Homo sapiens (Human).